A 128-amino-acid polypeptide reads, in one-letter code: Small ribosomal subunit protein uS13 (128 aa).

Residues 85–128 (GSYRGLRHRRSLPVRGQRTHTNARTRKGPRRGTVANKKKATGKT) form a disordered region. The span at 89 to 128 (GLRHRRSLPVRGQRTHTNARTRKGPRRGTVANKKKATGKT) shows a compositional bias: basic residues.

It belongs to the universal ribosomal protein uS13 family. As to quaternary structure, part of the 30S ribosomal subunit. Forms a loose heterodimer with protein S19. Forms two bridges to the 50S subunit in the 70S ribosome.

Its function is as follows. Located at the top of the head of the 30S subunit, it contacts several helices of the 16S rRNA. In the 70S ribosome it contacts the 23S rRNA (bridge B1a) and protein L5 of the 50S subunit (bridge B1b), connecting the 2 subunits; these bridges are implicated in subunit movement. Contacts the tRNAs in the A and P-sites. The polypeptide is Small ribosomal subunit protein uS13 (Solibacter usitatus (strain Ellin6076)).